The primary structure comprises 1359 residues: Transcriptional regulator ATRX homolog (1359 aa).

Residues 1–402 are disordered; the sequence is MRVGVSESED…RAEKERRKRL (402 aa). A compositionally biased stretch (basic and acidic residues) spans 11–49; sequence SDGHVIEDEDLEMARQIENERKEKRAQKLKEKREREGKP. The segment covering 50-61 has biased composition (basic residues); it reads PPKKRPAKKRKA. The span at 64–73 shows a compositional bias: acidic residues; the sequence is SEEDDDDEEE. 6 stretches are compositionally biased toward basic residues: residues 77–86, 103–123, 139–149, 165–177, 194–204, and 219–229; these read KSSKKSRKRA, KSKSKKKVDQKKKEKSKKKRT, KSKKKSKKTKK, VKKSKKNKEKSVK, KKSKKGLKKKA, and KKSKKKSKKVV. Residues 257-271 are compositionally biased toward acidic residues; that stretch reads ESSESEKSDEEEEEK. A compositionally biased stretch (basic and acidic residues) spans 321 to 336; sequence KDQKSESEASDVEEKV. Residues 347-357 show a composition bias toward low complexity; that stretch reads SESGSDSSEGS. A compositionally biased stretch (basic residues) spans 362 to 376; it reads RKSKKKEKPEKKKKG. The segment covering 383–397 has biased composition (basic and acidic residues); it reads KLQKETIDAERAEKE. The 203-residue stretch at 483–685 folds into the Helicase ATP-binding domain; it reads DRLDTEGSGG…HCMVNFVKPG (203 aa). Position 496–503 (496–503) interacts with ATP; sequence HCMGLGKT. Residues 636–639 carry the DEAH box motif; sequence DEAH. A disordered region spans residues 809–891; that stretch reads RVMREDAEEE…NSDDEDEEDG (83 aa). Residues 814–832 are compositionally biased toward acidic residues; it reads DAEEEADFIDDGDGSESES. Low complexity predominate over residues 833–847; that stretch reads EGSFKSGSESDSGKS. The 184-residue stretch at 951-1134 folds into the Helicase C-terminal domain; it reads LLVEIIKKCE…EAQIQRHYLG (184 aa).

Belongs to the SNF2/RAD54 helicase family.

It is found in the nucleus. The catalysed reaction is ATP + H2O = ADP + phosphate + H(+). Functionally, required for embryonic development and gonadogenesis. Also, functions redundantly with the transcriptional repressor lin-35 to regulate somatic gonad development. This chain is Transcriptional regulator ATRX homolog, found in Caenorhabditis elegans.